Reading from the N-terminus, the 387-residue chain is MNREFVEAMQHLALERGVSVEEILEAFKEALRKAYIKRQKGYKKEEIDQGKGPEVDVYIDPNSGRIEMVEVRRVVEKVEDPDKEIALAEALQYDPEVQVGDEMEFPINPEELSRMAIQDLRQILTQRLKESERNRIYNEYKDKEGQVLTGVVTRVDNRGNVFVELGRGEAYLPRSEQIPTEKYHPGQRIKVYLKKVDKSAKGPSLLVSRAHEKLLEHLLKQEVPEIAEGIVEIKAIAREPGRRSKVAVTSHNPNVDPIGACIGHKGQRIQAVSAELGREKVDIILWSKDPKEFIRNALSPAQVGSIELDPEAKKARVKVTKDQHSLAIGTGGQNVRLASKLTGYDIHFEEAEISDLDEALRRAAEEEAEARERKAREEFEKLFRDLG.

One can recognise an S1 motif domain in the interval Gly145–Arg209. Residues Ala312–Phe379 form the KH domain.

The protein belongs to the NusA family. Monomer. Binds directly to the core enzyme of the DNA-dependent RNA polymerase and to nascent RNA.

It localises to the cytoplasm. Functionally, participates in both transcription termination and antitermination. The chain is Transcription termination/antitermination protein NusA from Thermus thermophilus (strain ATCC 27634 / DSM 579 / HB8).